The chain runs to 1288 residues: CLIP-associating protein 2 (1288 aa).

Positions 1–62 are disordered; it reads MALSLSQDRS…AAKSGASKEG (62 aa). 2 stretches are compositionally biased toward low complexity: residues 19–32 and 40–62; these read GSRP…FKVP and ESAS…SKEG. Positions 62-312 are TOG 1; the sequence is GAGAVDEEDF…RTLQSCLKSS (251 aa). HEAT repeat units lie at residues 174–209, 210–246, and 251–288; these read HGAE…IRHT, HVPR…EWQT, and RHAA…HFPG. Disordered regions lie at residues 314 to 571 and 614 to 634; these read SVAS…SSRL and ANSD…NGSI. Low complexity-rich tracts occupy residues 317–337 and 347–358; these read SLPQ…RPLS and PAGSKSSGSPAS. Polar residues-rich tracts occupy residues 406–421 and 468–478; these read KQTL…SQVD and TALSTLSTGAQ. Residues 490-493 carry the SXIP motif 1 motif; it reads SRIP. Over residues 496–518 the composition is skewed to polar residues; it reads QGCSRDSSPTRLSVAPSNISHIY. Residues 527-530 carry the SXIP motif 2 motif; the sequence is SRIP. Positions 616 to 630 are enriched in low complexity; that stretch reads SDASSACSERSYSSR. Residues 638-889 are TOG 2; that stretch reads MRQTEDVAEV…TKLLQNHLRN (252 aa). 2 HEAT repeats span residues 718–755 and 780–817; these read RVFS…KMGA and LQFT…QMEP. Residues 891–900 are compositionally biased toward polar residues; sequence GNTAQASIGS. Disordered regions lie at residues 891 to 936 and 960 to 1047; these read GNTA…FDYD and SVRS…DSGV. A compositionally biased stretch (low complexity) spans 912-931; sequence SWSSPLTSPTNTSQNTPSPS. The span at 963–977 shows a compositional bias: basic and acidic residues; the sequence is SQEDMTEPPRKREGD. Over residues 1019–1030 the composition is skewed to low complexity; sequence SDSSFGSSSFNK. Over residues 1036–1046 the composition is skewed to acidic residues; it reads DQEESLTDDSG. HEAT repeat units follow at residues 1047-1086, 1091-1128, 1167-1204, and 1209-1246; these read VDQS…ETQL, EHFK…RQPW, ISPD…RLPK, and QMLP…VIGE.

This sequence belongs to the CLASP family. In terms of assembly, interacts with microtubules.

The protein resides in the cytoplasm. It localises to the cytoskeleton. Its subcellular location is the microtubule organizing center. It is found in the centrosome. The protein localises to the chromosome. The protein resides in the centromere. It localises to the kinetochore. Its subcellular location is the spindle. It is found in the golgi apparatus. The protein localises to the trans-Golgi network. The protein resides in the cell membrane. It localises to the cell projection. Its subcellular location is the ruffle membrane. Microtubule plus-end tracking protein that promotes the stabilization of dynamic microtubules. Involved in the nucleation of noncentrosomal microtubules originating from the trans-Golgi network (TGN). Required for the polarization of the cytoplasmic microtubule arrays in migrating cells towards the leading edge of the cell. May act at the cell cortex to enhance the frequency of rescue of depolymerizing microtubules. This cortical microtubule stabilizing activity is regulated at least in part by phosphatidylinositol 3-kinase signaling. Also performs a similar stabilizing function at the kinetochore which is essential for the bipolar alignment of chromosomes on the mitotic spindle. The sequence is that of CLIP-associating protein 2 (clasp2) from Danio rerio (Zebrafish).